The following is a 230-amino-acid chain: Sugar fermentation stimulation protein homolog (230 aa).

Belongs to the SfsA family.

In Clostridium botulinum (strain Loch Maree / Type A3), this protein is Sugar fermentation stimulation protein homolog.